The sequence spans 161 residues: Cytochrome c-type biogenesis protein CcmE (161 aa).

The Cytoplasmic portion of the chain corresponds to 1-13; sequence MSWLPKSPKARRR. A helical; Signal-anchor for type II membrane protein membrane pass occupies residues 14–34; the sequence is LMLVAAIAPVLAVAAGLTLWG. Residues 35–161 lie on the Periplasmic side of the membrane; that stretch reads LSDSISFFYT…QRPEHQGDAL (127 aa). Residues histidine 128 and tyrosine 132 each coordinate heme.

Belongs to the CcmE/CycJ family.

It is found in the cell inner membrane. In terms of biological role, heme chaperone required for the biogenesis of c-type cytochromes. Transiently binds heme delivered by CcmC and transfers the heme to apo-cytochromes in a process facilitated by CcmF and CcmH. This is Cytochrome c-type biogenesis protein CcmE from Phenylobacterium zucineum (strain HLK1).